Consider the following 61-residue polypeptide: Small ribosomal subunit protein uS14 (61 aa).

Positions 24, 27, 40, and 43 each coordinate Zn(2+).

Belongs to the universal ribosomal protein uS14 family. Zinc-binding uS14 subfamily. As to quaternary structure, part of the 30S ribosomal subunit. Contacts proteins S3 and S10. Requires Zn(2+) as cofactor.

In terms of biological role, binds 16S rRNA, required for the assembly of 30S particles and may also be responsible for determining the conformation of the 16S rRNA at the A site. The chain is Small ribosomal subunit protein uS14 from Clostridium botulinum (strain 657 / Type Ba4).